Reading from the N-terminus, the 122-residue chain is Small ribosomal subunit protein uS13 (122 aa).

The interval 96–122 is disordered; it reads LPCRGQRTHTNARTRKGPRKPIAGKKK.

The protein belongs to the universal ribosomal protein uS13 family. Part of the 30S ribosomal subunit. Forms a loose heterodimer with protein S19. Forms two bridges to the 50S subunit in the 70S ribosome.

Its function is as follows. Located at the top of the head of the 30S subunit, it contacts several helices of the 16S rRNA. In the 70S ribosome it contacts the 23S rRNA (bridge B1a) and protein L5 of the 50S subunit (bridge B1b), connecting the 2 subunits; these bridges are implicated in subunit movement. Contacts the tRNAs in the A and P-sites. The protein is Small ribosomal subunit protein uS13 of Magnetococcus marinus (strain ATCC BAA-1437 / JCM 17883 / MC-1).